A 133-amino-acid polypeptide reads, in one-letter code: Large ribosomal subunit protein uL22 (133 aa).

It belongs to the universal ribosomal protein uL22 family. Part of the 50S ribosomal subunit.

In terms of biological role, this protein binds specifically to 23S rRNA; its binding is stimulated by other ribosomal proteins, e.g. L4, L17, and L20. It is important during the early stages of 50S assembly. It makes multiple contacts with different domains of the 23S rRNA in the assembled 50S subunit and ribosome. The globular domain of the protein is located near the polypeptide exit tunnel on the outside of the subunit, while an extended beta-hairpin is found that lines the wall of the exit tunnel in the center of the 70S ribosome. This is Large ribosomal subunit protein uL22 from Nocardia farcinica (strain IFM 10152).